Here is a 321-residue protein sequence, read N- to C-terminus: Gap junction delta-2 protein (321 aa).

The Cytoplasmic portion of the chain corresponds to 1–19; sequence MGEWTILERLLEAAVQQHS. Residues 20 to 42 traverse the membrane as a helical segment; the sequence is TMIGRILLTVVVIFRILIVAIVG. Residues 43–75 lie on the Extracellular side of the membrane; the sequence is ETVYDDEQTMFVCNTLQPGCNQACYDRAFPISH. Residues 76–98 form a helical membrane-spanning segment; it reads IRYWVFQIIMVCTPSLCFITYSV. The Cytoplasmic portion of the chain corresponds to 99–197; the sequence is HQSAKQRERR…KLRRQEGISR (99 aa). The tract at residues 120–141 is disordered; that stretch reads PAESIGGPGGTGGGGSGGSKRE. The span at 125-137 shows a compositional bias: gly residues; that stretch reads GGPGGTGGGGSGG. The helical transmembrane segment at 198–220 threads the bilayer; it reads FYIIQVVFRNALEIGFLVGQYFL. Residues 221–252 are Extracellular-facing; that stretch reads YGFSVPGLYECNRYPCIKEVECYVSRPTEKTV. The chain crosses the membrane as a helical span at residues 253–275; the sequence is FLVFMFAVSGICVVLNLAELNHL. Residues 276–321 are Cytoplasmic-facing; it reads GWRKIKLAVRGAQAKRKSVYEIRNKDLPRVSVPNFGRTQSSDSAYV.

Belongs to the connexin family. Delta-type subfamily. A connexon is composed of a hexamer of connexins. As to expression, highly expressed in neurons.

Its subcellular location is the cell membrane. The protein localises to the cell junction. It is found in the gap junction. Its function is as follows. One gap junction consists of a cluster of closely packed pairs of transmembrane channels, the connexons, through which materials of low MW diffuse from one cell to a neighboring cell. In Rattus norvegicus (Rat), this protein is Gap junction delta-2 protein (Gjd2).